The primary structure comprises 79 residues: Potassium channel toxin Hge-beta-KTx (79 aa).

The N-terminal stretch at 1-21 (MAKSFFAAFLIIMLISSLVDG) is a signal peptide. The BetaSPN-type CS-alpha/beta domain maps to 48–79 (EYMCPVVSSFCKQHCARLGKSGQCDLLECICS). 3 cysteine pairs are disulfide-bonded: C51–C71, C58–C76, and C62–C78.

As to expression, expressed by the venom gland.

The protein resides in the secreted. The full peptide presents antibacterial and cytotoxic activities. The synthetic C-terminus (AA 33-76) inhibits voltage-gated potassium channels Kv1.1/KCNA1, Kv1.2/KCNA2, and Kv1.3/KCNA3. The polypeptide is Potassium channel toxin Hge-beta-KTx (Hoffmannihadrurus gertschi (Scorpion)).